A 357-amino-acid chain; its full sequence is S-adenosylmethionine:tRNA ribosyltransferase-isomerase (357 aa).

Belongs to the QueA family. Monomer.

Its subcellular location is the cytoplasm. It catalyses the reaction 7-aminomethyl-7-carbaguanosine(34) in tRNA + S-adenosyl-L-methionine = epoxyqueuosine(34) in tRNA + adenine + L-methionine + 2 H(+). The protein operates within tRNA modification; tRNA-queuosine biosynthesis. In terms of biological role, transfers and isomerizes the ribose moiety from AdoMet to the 7-aminomethyl group of 7-deazaguanine (preQ1-tRNA) to give epoxyqueuosine (oQ-tRNA). The chain is S-adenosylmethionine:tRNA ribosyltransferase-isomerase from Buchnera aphidicola subsp. Schizaphis graminum (strain Sg).